We begin with the raw amino-acid sequence, 396 residues long: 1-deoxy-D-xylulose 5-phosphate reductoisomerase (396 aa).

Positions 15, 16, 17, 18, 41, and 129 each coordinate NADPH. Position 130 (Lys130) interacts with 1-deoxy-D-xylulose 5-phosphate. Glu131 is a binding site for NADPH. Residue Asp155 coordinates Mn(2+). Residues Ser156, Glu157, Ser182, and His205 each coordinate 1-deoxy-D-xylulose 5-phosphate. Residue Glu157 coordinates Mn(2+). NADPH is bound at residue Gly211. Ser218, Asn223, Lys224, and Glu227 together coordinate 1-deoxy-D-xylulose 5-phosphate. Residue Glu227 participates in Mn(2+) binding.

It belongs to the DXR family. It depends on Mg(2+) as a cofactor. Requires Mn(2+) as cofactor.

It catalyses the reaction 2-C-methyl-D-erythritol 4-phosphate + NADP(+) = 1-deoxy-D-xylulose 5-phosphate + NADPH + H(+). It functions in the pathway isoprenoid biosynthesis; isopentenyl diphosphate biosynthesis via DXP pathway; isopentenyl diphosphate from 1-deoxy-D-xylulose 5-phosphate: step 1/6. Catalyzes the NADPH-dependent rearrangement and reduction of 1-deoxy-D-xylulose-5-phosphate (DXP) to 2-C-methyl-D-erythritol 4-phosphate (MEP). The protein is 1-deoxy-D-xylulose 5-phosphate reductoisomerase of Xanthomonas oryzae pv. oryzae (strain PXO99A).